Here is a 170-residue protein sequence, read N- to C-terminus: MSTEEPQADEEDEDLQYFVRIGQTDLDGTKSVERALTDMNGIGRRVARIIAEKAEVDRRDVLGALDEEKIDDVVAAVEEYGDEVPEWLTNHQKDFFTGETTHEIGNDLQMSRRQDINRMKKIDAYRGVRHKRGQKVRGQRTKSTGRTEGTIGVNVEAIKEEQAEDGGDEE.

The span at 128-140 (VRHKRGQKVRGQR) shows a compositional bias: basic residues. Residues 128 to 170 (VRHKRGQKVRGQRTKSTGRTEGTIGVNVEAIKEEQAEDGGDEE) form a disordered region.

Belongs to the universal ribosomal protein uS13 family. In terms of assembly, part of the 30S ribosomal subunit. Forms a loose heterodimer with protein S19. Forms two bridges to the 50S subunit in the 70S ribosome.

Its function is as follows. Located at the top of the head of the 30S subunit, it contacts several helices of the 16S rRNA. In the 70S ribosome it contacts the 23S rRNA (bridge B1a) and protein L5 of the 50S subunit (bridge B1b), connecting the 2 subunits; these bridges are implicated in subunit movement. The polypeptide is Small ribosomal subunit protein uS13 (Natronomonas pharaonis (strain ATCC 35678 / DSM 2160 / CIP 103997 / JCM 8858 / NBRC 14720 / NCIMB 2260 / Gabara) (Halobacterium pharaonis)).